The primary structure comprises 152 residues: uncharacterized protein (152 aa).

The next 3 helical transmembrane spans lie at 15–35 (IINVFVSFGFNLILGILIYDI), 43–63 (LVVACILIAMPIIAFLILILT), and 117–137 (TFLLLLIAFLAFGLIFTKLLI).

It to M.jannaschii MJ0129 and MJ0587.

The protein localises to the cell membrane. This is an uncharacterized protein from Methanocaldococcus jannaschii (strain ATCC 43067 / DSM 2661 / JAL-1 / JCM 10045 / NBRC 100440) (Methanococcus jannaschii).